Reading from the N-terminus, the 309-residue chain is Probable ABC transporter permease protein y4oQ (309 aa).

7 consecutive transmembrane segments (helical) span residues 25-45, 89-109, 123-143, 174-194, 221-241, 246-266, and 278-298; these read VVWF…VPLV, LIYA…FAVL, LMLI…KLLY, VIIV…LAGL, LPHL…GVMA, IFLL…VYAY, and TTAI…PLIW. In terms of domain architecture, ABC transmembrane type-1 spans 85–296; the sequence is IRVTLIYAVV…VFVLAISAPL (212 aa).

Belongs to the binding-protein-dependent transport system permease family. MalFG subfamily.

It localises to the cell inner membrane. Its function is as follows. Probably part of the binding-protein-dependent transport system y4oPQRS. This system probably transports a sugar-like molecule. Probably responsible for the translocation of the substrate across the membrane. The sequence is that of Probable ABC transporter permease protein y4oQ from Sinorhizobium fredii (strain NBRC 101917 / NGR234).